Here is a 430-residue protein sequence, read N- to C-terminus: Argininosuccinate lyase (430 aa).

Belongs to the lyase 1 family. Argininosuccinate lyase subfamily.

Its subcellular location is the cytoplasm. It catalyses the reaction 2-(N(omega)-L-arginino)succinate = fumarate + L-arginine. It functions in the pathway amino-acid biosynthesis; L-arginine biosynthesis; L-arginine from L-ornithine and carbamoyl phosphate: step 3/3. This is Argininosuccinate lyase from Sorangium cellulosum (strain So ce56) (Polyangium cellulosum (strain So ce56)).